Consider the following 271-residue polypeptide: Interleukin-1 alpha (271 aa).

Residues 1–112 (MAKVPDMFED…DSEEEIIKPR (112 aa)) constitute a propeptide that is removed on maturation. Residue Lys82 is modified to N6-acetyllysine. 2 N6-myristoyl lysine lipidation sites follow: Lys82 and Lys83. The tract at residues 82–86 (KKRRL) is nuclear localization signal (NLS). The residue at position 87 (Ser87) is a Phosphoserine. 2 N-linked (GlcNAc...) asparagine glycosylation sites follow: Asn102 and Asn141.

This sequence belongs to the IL-1 family. As to quaternary structure, monomer. Interacts with TMED10; the interaction mediates the translocation from the cytoplasm into the ERGIC (endoplasmic reticulum-Golgi intermediate compartment) and thereby secretion. Interacts with IL1R1. Interacts with S100A13; this interaction is the first step in the export of IL1A, followed by direct translocation of this complex across the plasma membrane. Acetylated within its nuclear localization sequence, which impacts subcellular localization. In terms of processing, proteolytic processed by CAPN1 in a calcium-dependent manner. Cleavage from 31 kDa precursor to 18 kDa biologically active molecules. Post-translationally, phosphorylated. Phosphorylation greatly enhances susceptibility to digestion and promotes the conversion of pre-IL1A alpha to the biologically active IL1A.

The protein localises to the nucleus. It is found in the cytoplasm. The protein resides in the secreted. Its function is as follows. Cytokine constitutively present intracellularly in nearly all resting non-hematopoietic cells that plays an important role in inflammation and bridges the innate and adaptive immune systems. After binding to its receptor IL1R1 together with its accessory protein IL1RAP, forms the high affinity interleukin-1 receptor complex. Signaling involves the recruitment of adapter molecules such as MYD88, IRAK1 or IRAK4. In turn, mediates the activation of NF-kappa-B and the three MAPK pathways p38, p42/p44 and JNK pathways. Within the cell, acts as an alarmin and cell death results in its liberation in the extracellular space after disruption of the cell membrane to induce inflammation and alert the host to injury or damage. In addition to its role as a danger signal, which occurs when the cytokine is passively released by cell necrosis, directly senses DNA damage and acts as a signal for genotoxic stress without loss of cell integrity. In Homo sapiens (Human), this protein is Interleukin-1 alpha (IL1A).